A 919-amino-acid polypeptide reads, in one-letter code: Envelope glycoprotein B (919 aa).

The N-terminal stretch at 1–28 (MSKDSTSLGVRTIVIACLVLLGCCIVEA) is a signal peptide. Residues 29–788 (VPTTPSSQPS…SGIASFINNP (760 aa)) lie on the Virion surface side of the membrane. 5 disulfide bridges follow: cysteine 81/cysteine 586, cysteine 98/cysteine 542, cysteine 172/cysteine 237, cysteine 330/cysteine 378, and cysteine 607/cysteine 647. Asparagine 106 is a glycosylation site (N-linked (GlcNAc...) asparagine; by host). Residues 138 to 144 (VWKGYSH) form an involved in fusion and/or binding to host membrane region. Asparagine 216 carries an N-linked (GlcNAc...) asparagine; by host glycan. The tract at residues 223-231 (GWMPWRHYT) is involved in fusion and/or binding to host membrane. Residues asparagine 321, asparagine 364, asparagine 438, asparagine 456, asparagine 493, asparagine 496, and asparagine 499 are each glycosylated (N-linked (GlcNAc...) asparagine; by host). N-linked (GlcNAc...) asparagine; by host glycosylation is found at asparagine 666 and asparagine 688. 2 hydrophobic membrane proximal region regions span residues 733–786 (IDSV…SFIN) and 765–785 (TLVL…ASFI). A helical transmembrane segment spans residues 789-809 (FGGLAIGLLVIAGLVAAFFAY). At 810–919 (RYVMQLRSNP…DDPMESEKMV (110 aa)) the chain is on the intravirion side. The Golgi targeting signature appears at 864–867 (YMSM). The disordered stretch occupies residues 900–919 (RGPKYTRLREDDPMESEKMV). The Internalization motif motif lies at 904 to 907 (YTRL). The segment covering 906 to 919 (RLREDDPMESEKMV) has biased composition (basic and acidic residues).

The protein belongs to the herpesviridae glycoprotein B family. Homotrimer; disulfide-linked. Binds to heparan sulfate proteoglycans. Interacts with gH/gL heterodimer. Post-translationally, a proteolytic cleavage by host furin generates two subunits that remain linked by disulfide bonds.

Its subcellular location is the virion membrane. The protein resides in the host cell membrane. It is found in the host endosome membrane. It localises to the host Golgi apparatus membrane. Functionally, envelope glycoprotein that forms spikes at the surface of virion envelope. Essential for the initial attachment to heparan sulfate moieties of the host cell surface proteoglycans. Involved in fusion of viral and cellular membranes leading to virus entry into the host cell. Following initial binding to its host receptors, membrane fusion is mediated by the fusion machinery composed at least of gB and the heterodimer gH/gL. May be involved in the fusion between the virion envelope and the outer nuclear membrane during virion egress. The polypeptide is Envelope glycoprotein B (Equus caballus (Horse)).